A 377-amino-acid chain; its full sequence is Succinyl-diaminopimelate desuccinylase (377 aa).

His66 serves as a coordination point for Zn(2+). Asp68 is a catalytic residue. A Zn(2+)-binding site is contributed by Asp99. Glu133 functions as the Proton acceptor in the catalytic mechanism. Zn(2+) contacts are provided by Glu134, Glu162, and His348.

The protein belongs to the peptidase M20A family. DapE subfamily. As to quaternary structure, homodimer. It depends on Zn(2+) as a cofactor. Co(2+) is required as a cofactor.

It carries out the reaction N-succinyl-(2S,6S)-2,6-diaminopimelate + H2O = (2S,6S)-2,6-diaminopimelate + succinate. The protein operates within amino-acid biosynthesis; L-lysine biosynthesis via DAP pathway; LL-2,6-diaminopimelate from (S)-tetrahydrodipicolinate (succinylase route): step 3/3. Its function is as follows. Catalyzes the hydrolysis of N-succinyl-L,L-diaminopimelic acid (SDAP), forming succinate and LL-2,6-diaminopimelate (DAP), an intermediate involved in the bacterial biosynthesis of lysine and meso-diaminopimelic acid, an essential component of bacterial cell walls. The protein is Succinyl-diaminopimelate desuccinylase of Marinomonas sp. (strain MWYL1).